The sequence spans 91 residues: Small ribosomal subunit protein uS19 (91 aa).

It belongs to the universal ribosomal protein uS19 family.

Its function is as follows. Protein S19 forms a complex with S13 that binds strongly to the 16S ribosomal RNA. The polypeptide is Small ribosomal subunit protein uS19 (Psychrobacter arcticus (strain DSM 17307 / VKM B-2377 / 273-4)).